Reading from the N-terminus, the 619-residue chain is Putative zinc transporter At3g08650 (619 aa).

15 helical membrane-spanning segments follow: residues 25 to 45 (MMHS…VVFI), 102 to 122 (VALF…PFFF), 129 to 149 (WAGI…FDLV), 155 to 175 (HGSG…IWLC), 198 to 218 (VVLV…GVGV), 230 to 250 (LLVT…VSMV), 261 to 281 (AMLW…PAFL), 289 to 309 (FLPF…IAEV), 354 to 374 (GFFV…FLVA), 383 to 403 (HALL…WRPL), 405 to 425 (LLLS…IGAG), 465 to 485 (LLAC…LGVA), 528 to 548 (AAAL…LAGI), 552 to 572 (GLDH…WQVI), and 585 to 605 (VGMV…RLVC).

The protein belongs to the ZIP transporter (TC 2.A.5) family. ZupT subfamily.

The protein localises to the membrane. In terms of biological role, may transport zinc. The chain is Putative zinc transporter At3g08650 from Arabidopsis thaliana (Mouse-ear cress).